The following is a 99-amino-acid chain: Small ribosomal subunit protein uS19 (99 aa).

The disordered stretch occupies residues 76-99 (PTRSFRGHAGGGKAEKGGSAPRKK).

This sequence belongs to the universal ribosomal protein uS19 family.

In terms of biological role, protein S19 forms a complex with S13 that binds strongly to the 16S ribosomal RNA. This chain is Small ribosomal subunit protein uS19, found in Pelodictyon phaeoclathratiforme (strain DSM 5477 / BU-1).